The chain runs to 427 residues: UPF0229 protein YeaH (427 aa).

Basic and acidic residues predominate over residues 79 to 90; it reads NDHFVQNDRIER. The segment at 79-110 is disordered; it reads NDHFVQNDRIERPQGGGGGSGSGQGQASQDGE. Residues 92-102 show a composition bias toward gly residues; the sequence is QGGGGGSGSGQ.

This sequence belongs to the UPF0229 family.

This is UPF0229 protein YeaH from Escherichia coli O139:H28 (strain E24377A / ETEC).